Here is a 202-residue protein sequence, read N- to C-terminus: MSRYRGPRVRIIRRLGVLPGLTNKTPQLKTNSINQSISNKKISQYRIRLEEKQKLRFHYGITERQLLNYVRIARKAKGSTGEVLLQLLEMRLDNIIFRLGMAPTIPGARQLVNHRHILVNDRIVNIPSYRCKPEDSITIKDRQKSQAIISKNLNLYQKYKTPNHLTYNFLKKKGLVTQILDRESIGLKINELLVVEYYSRQA.

An S4 RNA-binding domain is found at 90–153 (MRLDNIIFRL…KSQAIISKNL (64 aa)).

It belongs to the universal ribosomal protein uS4 family. In terms of assembly, part of the 30S ribosomal subunit. Contacts protein S5. The interaction surface between S4 and S5 is involved in control of translational fidelity.

Its subcellular location is the plastid. It localises to the chloroplast. Its function is as follows. One of the primary rRNA binding proteins, it binds directly to 16S rRNA where it nucleates assembly of the body of the 30S subunit. In terms of biological role, with S5 and S12 plays an important role in translational accuracy. The sequence is that of Small ribosomal subunit protein uS4c (rps4) from Rosulabryum capillare (Capillary thread-moss).